Reading from the N-terminus, the 148-residue chain is Lysozyme C (148 aa).

The N-terminal stretch at 1 to 18 (MKVLVILGLVLLSVMVQG) is a signal peptide. The C-type lysozyme domain maps to 19–148 (KVFERCELAR…VSQYVQGCGV (130 aa)). Disulfide bonds link C24-C146, C48-C134, C83-C99, and C95-C113. Catalysis depends on residues E53 and D71.

It belongs to the glycosyl hydrolase 22 family. As to quaternary structure, monomer.

It localises to the secreted. The enzyme catalyses Hydrolysis of (1-&gt;4)-beta-linkages between N-acetylmuramic acid and N-acetyl-D-glucosamine residues in a peptidoglycan and between N-acetyl-D-glucosamine residues in chitodextrins.. In terms of biological role, lysozymes have primarily a bacteriolytic function; those in tissues and body fluids are associated with the monocyte-macrophage system and enhance the activity of immunoagents. The protein is Lysozyme C (LYZ) of Saimiri sciureus (Common squirrel monkey).